We begin with the raw amino-acid sequence, 487 residues long: DNA ligase (487 aa).

Catalysis depends on Lys159, which acts as the N6-AMP-lysine intermediate. Arg164, Arg182, and Glu217 together coordinate ATP. Glu217 is an a divalent metal cation binding site. Residues 229 to 237 (EGLDFLFDA) form an interaction with the sliding clamp region. Glu344 is an a divalent metal cation binding site. ATP-binding residues include Arg359 and Lys365.

This sequence belongs to the ATP-dependent DNA ligase family. Interacts with the sliding clamp. The cofactor is a divalent metal cation.

It catalyses the reaction ATP + (deoxyribonucleotide)n-3'-hydroxyl + 5'-phospho-(deoxyribonucleotide)m = (deoxyribonucleotide)n+m + AMP + diphosphate.. Its function is as follows. DNA ligase, which is expressed in the early stage of lytic development, has been implicated in T4 DNA synthesis and genetic recombination. It may also play a role in T4 DNA repair. The polypeptide is DNA ligase (30) (Enterobacteria phage T4 (Bacteriophage T4)).